A 244-amino-acid chain; its full sequence is Small ribosomal subunit protein uS2 (244 aa).

It belongs to the universal ribosomal protein uS2 family.

In Psychromonas ingrahamii (strain DSM 17664 / CCUG 51855 / 37), this protein is Small ribosomal subunit protein uS2.